The chain runs to 425 residues: Probable mannosyltransferase KTR2 (425 aa).

Residues 1–13 (MQICKVFLTQVKK) lie on the Cytoplasmic side of the membrane. The chain crosses the membrane as a helical; Signal-anchor for type II membrane protein span at residues 14 to 33 (LLFVSLLFCLIAQTCWLALV). Residues 34–89 (PYQRQLSLDSYFFRRSREVSSRYDFTRRRHMNQTLKLSSNTYNDEPLNKTKGIKNQ) are stem region. Residues 34–425 (PYQRQLSLDS…SGKYFLKHDS (392 aa)) are Lumenal-facing. Residues N65, N81, N92, and N167 are each glycosylated (N-linked (GlcNAc...) asparagine). Residues 90-425 (RENATLLMLV…SGKYFLKHDS (336 aa)) form a catalytic region. Catalysis depends on E313, which acts as the Nucleophile.

It belongs to the glycosyltransferase 15 family.

The protein localises to the golgi apparatus membrane. It functions in the pathway protein modification; protein glycosylation. Functionally, involved in N-linked glycosylation. Transfers an alpha-D-mannosyl residue from GDP-mannose into lipid-linked oligosaccharide, forming an alpha-(1-&gt;2)-D-mannosyl-D-mannose linkage. This Saccharomyces cerevisiae (strain ATCC 204508 / S288c) (Baker's yeast) protein is Probable mannosyltransferase KTR2 (KTR2).